Reading from the N-terminus, the 389-residue chain is Curcumin synthase 1 (389 aa).

C164 is a catalytic residue.

It belongs to the thiolase-like superfamily. Chalcone/stilbene synthases family. As to quaternary structure, homodimer. As to expression, expressed in both the leaf and rhizome, with higher expression in the rhizome.

The catalysed reaction is (E)-feruloylacetyl-CoA + (E)-feruloyl-CoA + H2O = curcumin + CO2 + 2 CoA. The protein operates within secondary metabolite biosynthesis; flavonoid biosynthesis. Catalyzes the synthesis of curcumin by condensing feruloyl-CoA with a diketide-CoA in the curcuminoid biosynthesis. The polypeptide is Curcumin synthase 1 (CURS1) (Curcuma longa (Turmeric)).